A 152-amino-acid polypeptide reads, in one-letter code: Xanthine-guanine phosphoribosyltransferase (152 aa).

5-phospho-alpha-D-ribose 1-diphosphate-binding positions include 37-38, R69, and 88-96; these read RG and DDLVDSGDT. R69 contacts GMP. D89 contributes to the Mg(2+) binding site. D92 and I135 together coordinate guanine. D92 and I135 together coordinate xanthine. Residues 92–96 and 134–135 contribute to the GMP site; these read DSGDT and WI.

The protein belongs to the purine/pyrimidine phosphoribosyltransferase family. XGPT subfamily. In terms of assembly, homotetramer. Mg(2+) serves as cofactor.

It localises to the cell inner membrane. The catalysed reaction is GMP + diphosphate = guanine + 5-phospho-alpha-D-ribose 1-diphosphate. The enzyme catalyses XMP + diphosphate = xanthine + 5-phospho-alpha-D-ribose 1-diphosphate. It carries out the reaction IMP + diphosphate = hypoxanthine + 5-phospho-alpha-D-ribose 1-diphosphate. It participates in purine metabolism; GMP biosynthesis via salvage pathway; GMP from guanine: step 1/1. It functions in the pathway purine metabolism; XMP biosynthesis via salvage pathway; XMP from xanthine: step 1/1. Purine salvage pathway enzyme that catalyzes the transfer of the ribosyl-5-phosphate group from 5-phospho-alpha-D-ribose 1-diphosphate (PRPP) to the N9 position of the 6-oxopurines guanine and xanthine to form the corresponding ribonucleotides GMP (guanosine 5'-monophosphate) and XMP (xanthosine 5'-monophosphate), with the release of PPi. To a lesser extent, also acts on hypoxanthine. This Aliivibrio salmonicida (strain LFI1238) (Vibrio salmonicida (strain LFI1238)) protein is Xanthine-guanine phosphoribosyltransferase.